We begin with the raw amino-acid sequence, 575 residues long: Cyclic nucleotide-gated channel alpha-4 (575 aa).

At 1-38 the chain is on the cytoplasmic side; it reads MSQDGKVKTTESTPPAPTKARKWLPVLDPSGDYYYWWL. A helical membrane pass occupies residues 39–60; that stretch reads NTMVFPIMYNLIIVVCRACFPD. Over 61–70 the chain is Extracellular; that stretch reads LQHSYLVAWF. A helical membrane pass occupies residues 71 to 91; sequence VLDYTSDLLYLLDIGVRFHTG. At 92–116 the chain is on the cytoplasmic side; that stretch reads FLEQGILVVDKGMIASRYVRTWSFL. Residues 117–135 form a helical membrane-spanning segment; the sequence is LDLASLVPTDAAYVQLGPH. Residues 136 to 140 lie on the Extracellular side of the membrane; sequence IPTLR. The helical transmembrane segment at 141–159 threads the bilayer; that stretch reads LNRFLRVPRLFEAFDRTET. The Cytoplasmic segment spans residues 160–166; sequence RTAYPNA. The tract at residues 164–272 is ion conduction pathway; it reads PNAFRIAKLM…GSMSSVIYNM (109 aa). A helical transmembrane segment spans residues 167-190; it reads FRIAKLMLYIFVVIHWNSCLYFAL. Residues 191–213 are Extracellular-facing; that stretch reads SRYLGFGRDAWVYPDPAQPGFER. The next 2 helical transmembrane spans lie at 214–248 and 249–273; these read LRRQYLYSFYFSTLILTTVGDTPLPDREEEYLFMV and GDFLLAVMGFATIMGSMSSVIYNMN. The segment at 231–234 is selectivity filter; sequence TVGD. Residues 274 to 350 form a C-linker region; the sequence is TADAAFYPDH…STLSRVQIFQ (77 aa). Over 274 to 575 the chain is Cytoplasmic; it reads TADAAFYPDH…AGQAGPSGIE (302 aa). The IQ-type signature appears at 292 to 302; sequence LQHVNKRLERR. 348 to 471 contributes to the a nucleoside 3',5'-cyclic phosphate binding site; it reads IFQNCEASLL…AVMEEKGREI (124 aa). Positions 354-474 are cyclic nucleotide-binding domain; that stretch reads ASLLEELVLK…EEKGREILLK (121 aa). The 3',5'-cyclic GMP site is built by Gly414, Ser417, Arg430, and Thr431. 3',5'-cyclic AMP-binding residues include Arg430 and Thr431. The stretch at 493 to 547 forms a coiled coil; that stretch reads TESRLKGLDQQLDDLQTKFARLLAELESSALKIAYRIERLEWQTREWPMPEDMGE. Positions 537–575 are disordered; sequence REWPMPEDMGEADDEAEPGEGTSKDGEGKAGQAGPSGIE. Residues 544-554 show a composition bias toward acidic residues; the sequence is DMGEADDEAEP.

It belongs to the cyclic nucleotide-gated cation channel (TC 1.A.1.5) family. CNGA4 subfamily. As to quaternary structure, the olfactory cyclic nucleotide-gated channel is an heterotetramer composed of CNGA2, CNGA4 and CNGB1b subunits with 2:1:1 stoichiometry. May form homomeric channels gated by nitric oxide. N-glycosylated. As to expression, olfactory neurons. Expressed in olfactory sensory cilia (at protein level).

Its subcellular location is the cell projection. It is found in the cilium membrane. The catalysed reaction is Ca(2+)(in) = Ca(2+)(out). It catalyses the reaction Na(+)(in) = Na(+)(out). The enzyme catalyses K(+)(in) = K(+)(out). It carries out the reaction NH4(+)(in) = NH4(+)(out). The catalysed reaction is Rb(+)(in) = Rb(+)(out). It catalyses the reaction Li(+)(in) = Li(+)(out). The enzyme catalyses Cs(+)(in) = Cs(+)(out). With respect to regulation, ca(2+)-calmodulin exerts its inhibitory effect in cAMP sensitivity by binding to IQ-like motif of CNGA4 and preferably binds to the channel in the closed state. Inhibition by PIP3 of the CNG channel probably occurs via CGNA2 binding. Ca(2+) currents are inhibited by pimozide, an L-type Ca(2+) channel blocker. In terms of biological role, pore-forming subunit of the olfactory cyclic nucleotide-gated channel. Operates in the cilia of olfactory sensory neurons where chemical stimulation of the odorant is converted to an electrical signal. Mediates odorant-induced cAMP-dependent Ca(2+) influx triggering neuron depolarization. The rise of intracellular Ca(2+) levels potentiates the olfactory response by activating Ca(2+)-dependent Cl(-) channels, but it also serves as a negative feedback signal to desensitize the channel for rapid adaptation to odorants. Conducts cAMP- and cGMP-gated ion currents, with permeability for monovalent and divalent cations. May conduct nitric oxide-gated Ca(2+) currents relevant to neurons of vomeronasal organ, a system involved in the perception of pheromones. The polypeptide is Cyclic nucleotide-gated channel alpha-4 (Rattus norvegicus (Rat)).